An 810-amino-acid polypeptide reads, in one-letter code: MVMAYFVENFWGEKNSGFDVLYHNMKHGQISTKELADFVRERATIEEAYSRSMTKLAKSASNYSQLGTFAPVWDVFKTSTEKLANCHLDLVRKLQELIKEVQKYGEEQVKSHKKTKEEVAGTLEAVQTIQSITQALQKSKENYNAKCVEQERLKKEGATQREIEKAAVKSKKATDTYKLYVEKYALAKADFEQKMTETAQKFQDIEETHLIHIKEIIGSLSNAIKEIHLQIGQVHEEFINNMANTTVESLIQKFAESKGTGKERPGLIEFEECDTASAVEGIKPRKRKTFALPGIIKKEKDAESVECPDADSLNIPDVDEEGYSIKPETNQNDTKENHFYSSSDSDSEDEEPKKYRIEIKPMHPNNSHHTMASLDELKVSIGNITLSPAISRHSPVQMNRNLSNEELTKSKPSAPPNEKGTSDLLAWDPLFGPSLDSSSSSSLTSSSSARPTTPLSVGTIVPPPRPASRPKLTSGKLSGINEIPRPFSPPVTSNTSPPPAAPLARAESSSSISSSASLSAANTPTVGVSRGPSPVSLGNQDTLPVAVALTESVNAYFKGADPTKCIVKITGDMTMSFPSGIIKVFTSNPTPAVLCFRVKNISRLEQILPNAQLVFSDPSQCDSNTKDFWMNMQAVTVYLKKLSEQNPAASYYNVDVLKYQVSSNGIQSTPLNLATYWKCSASTTDLRVDYKYNPEAMVAPSVLSNIQVVVPVDGGVTNMQSLPPAIWNAEQMKAFWKLSSISEKSENGGSGSLRAKFDLSEGPSKPTTLAVQFLSEGSTLSGVDFELVGTGYRLSLIKKRFATGRYLADC.

Residues 3 to 250 (MAYFVENFWG…NMANTTVESL (248 aa)) enclose the F-BAR domain. Positions 3–274 (MAYFVENFWG…PGLIEFEECD (272 aa)) are mediates dimerization and binding to membranes enriched in Pi(4,5)-P2 and induces their tubulation. Residues 87–156 (HLDLVRKLQE…CVEQERLKKE (70 aa)) adopt a coiled-coil conformation. Lysine 297 participates in a covalent cross-link: Glycyl lysine isopeptide (Lys-Gly) (interchain with G-Cter in SUMO2). Positions 301-352 (DAESVECPDADSLNIPDVDEEGYSIKPETNQNDTKENHFYSSSDSDSEDEEP) are disordered. Residue serine 312 is modified to Phosphoserine. The residue at position 385 (threonine 385) is a Phosphothreonine. 3 positions are modified to phosphoserine: serine 387, serine 394, and serine 403. Residues 404 to 537 (NEELTKSKPS…VSRGPSPVSL (134 aa)) are disordered. Residues 433–456 (PSLDSSSSSSLTSSSSARPTTPLS) are compositionally biased toward low complexity. Phosphoserine is present on residues serine 488, serine 493, serine 496, serine 508, serine 510, serine 511, and serine 533. Over residues 502-521 (PLARAESSSSISSSASLSAA) the composition is skewed to low complexity. Residues 521–810 (ANTPTVGVSR…FATGRYLADC (290 aa)) are mediates interaction with DAB2, EPS15, EPS15R and ITSN1. An MHD domain is found at 542 to 809 (TLPVAVALTE…RFATGRYLAD (268 aa)).

The protein belongs to the FCHO family. In terms of assembly, homodimer; disulfide-linked. May form homotetramer. Interacts with AP2A1. Interacts with EPS15, EPS15R, ITSN1 and ITSN2; recruit those scaffolding proteins which in turn may interact with the adaptor protein complex AP-2 at the plasma membrane. Interacts with DAB2 (via DPF motifs); mediates LDL receptor/LDLR endocytosis. Ubiquitinated. Mainly undergoes monoubiquitination but also polyubiquitination.

It is found in the membrane. Its subcellular location is the clathrin-coated pit. Functionally, functions in an early step of clathrin-mediated endocytosis. Has both a membrane binding/bending activity and the ability to recruit proteins essential to the formation of functional clathrin-coated pits. Has a lipid-binding activity with a preference for membranes enriched in phosphatidylserine and phosphoinositides (Pi(4,5) biphosphate) like the plasma membrane. Its membrane-bending activity might be important for the subsequent action of clathrin and adaptors in the formation of clathrin-coated vesicles. Involved in adaptor protein complex AP-2-dependent endocytosis of the transferrin receptor, it also functions in the AP-2-independent endocytosis of the LDL receptor. The polypeptide is F-BAR domain only protein 2 (FCHO2) (Homo sapiens (Human)).